A 376-amino-acid polypeptide reads, in one-letter code: Protein STRICTOSIDINE SYNTHASE-LIKE 8 (376 aa).

The signal sequence occupies residues Met1–Gly31. 3 N-linked (GlcNAc...) asparagine glycosylation sites follow: Asn98, Asn172, and Asn224.

The protein belongs to the strictosidine synthase family.

The protein localises to the vacuole. This Arabidopsis thaliana (Mouse-ear cress) protein is Protein STRICTOSIDINE SYNTHASE-LIKE 8.